A 352-amino-acid chain; its full sequence is 3-isopropylmalate dehydrogenase (352 aa).

71–87 (GAHDSAWNQLPRHLRPE) is a binding site for NAD(+). Substrate-binding residues include Arg94, Arg104, Arg132, and Asp218. Residues Asp218, Asp242, and Asp246 each contribute to the Mg(2+) site. Position 275–287 (275–287 (GSAPDIAGQGVAN)) interacts with NAD(+).

This sequence belongs to the isocitrate and isopropylmalate dehydrogenases family. LeuB type 1 subfamily. In terms of assembly, homodimer. Mg(2+) serves as cofactor. It depends on Mn(2+) as a cofactor.

It localises to the cytoplasm. It catalyses the reaction (2R,3S)-3-isopropylmalate + NAD(+) = 4-methyl-2-oxopentanoate + CO2 + NADH. It participates in amino-acid biosynthesis; L-leucine biosynthesis; L-leucine from 3-methyl-2-oxobutanoate: step 3/4. Its function is as follows. Catalyzes the oxidation of 3-carboxy-2-hydroxy-4-methylpentanoate (3-isopropylmalate) to 3-carboxy-4-methyl-2-oxopentanoate. The product decarboxylates to 4-methyl-2 oxopentanoate. The protein is 3-isopropylmalate dehydrogenase of Deinococcus radiodurans (strain ATCC 13939 / DSM 20539 / JCM 16871 / CCUG 27074 / LMG 4051 / NBRC 15346 / NCIMB 9279 / VKM B-1422 / R1).